The primary structure comprises 233 residues: Uridylate kinase (233 aa).

ATP is bound by residues 8-11 (KLSG), Gly51, and Arg55. UMP contacts are provided by residues Asp68 and 129-136 (TSNPFFTT). ATP contacts are provided by Thr156, Tyr162, and Asp165.

Belongs to the UMP kinase family. As to quaternary structure, homohexamer.

The protein localises to the cytoplasm. It catalyses the reaction UMP + ATP = UDP + ADP. It functions in the pathway pyrimidine metabolism; CTP biosynthesis via de novo pathway; UDP from UMP (UMPK route): step 1/1. Inhibited by UTP. Its function is as follows. Catalyzes the reversible phosphorylation of UMP to UDP. The polypeptide is Uridylate kinase (Thermosipho melanesiensis (strain DSM 12029 / CIP 104789 / BI429)).